A 337-amino-acid chain; its full sequence is Thymidylate synthase (337 aa).

Residues Arg-74 and 199–200 (RR) contribute to the dUMP site. The Nucleophile role is filled by Cys-219. DUMP is bound by residues 239–242 (RSGD), Asn-250, and 280–282 (HIY). Asp-242 contributes to the (6R)-5,10-methylene-5,6,7,8-tetrahydrofolate binding site. Ala-336 is a (6R)-5,10-methylene-5,6,7,8-tetrahydrofolate binding site.

This sequence belongs to the thymidylate synthase family. As to quaternary structure, homodimer.

The catalysed reaction is dUMP + (6R)-5,10-methylene-5,6,7,8-tetrahydrofolate = 7,8-dihydrofolate + dTMP. It functions in the pathway pyrimidine metabolism; dTTP biosynthesis. This Homo sapiens (Human) protein is Thymidylate synthase (70).